The primary structure comprises 203 residues: SCO2-like protein RT0576 (203 aa).

The Thioredoxin domain maps to 42 to 203 (KDNIKIGEAF…KEIMEFLRNE (162 aa)). Cu cation is bound by residues cysteine 80, cysteine 84, and histidine 170.

The protein belongs to the SCO1/2 family.

In Rickettsia typhi (strain ATCC VR-144 / Wilmington), this protein is SCO2-like protein RT0576.